Reading from the N-terminus, the 814-residue chain is Dimethyl sulfoxide reductase DmsA (814 aa).

Positions 1 to 45 (MKTKIPDAVLAAEVSRRGLVKTTAIGGLAMASSALTLPFSRIAHA) form a signal peptide, tat-type signal. Positions 56 to 118 (EKVIWSACTV…SMRRRVYNPD (63 aa)) constitute a 4Fe-4S Mo/W bis-MGD-type domain. Cysteine 63, cysteine 67, cysteine 71, and cysteine 104 together coordinate [4Fe-4S] cluster. Mo-bis(molybdopterin guanine dinucleotide) is bound by residues 172 to 176 (LGGTM), serine 205, 244 to 245 (ET), 270 to 271 (ID), 291 to 293 (GTD), 386 to 387 (WG), arginine 390, asparagine 488, 512 to 513 (ID), histidine 701, 707 to 709 (HST), asparagine 788, and 804 to 805 (SH).

Belongs to the prokaryotic molybdopterin-containing oxidoreductase family. Heterotrimeric enzyme composed of a catalytic heterodimer (DmsAB) and a membrane anchor protein (DmsC). [4Fe-4S] cluster is required as a cofactor. Mo-bis(molybdopterin guanine dinucleotide) serves as cofactor. In terms of processing, exported by the Tat system. The position of the signal peptide cleavage has been experimentally proven. Can also be exported by the Sec system.

The protein localises to the cell membrane. It carries out the reaction dimethyl sulfide + a menaquinone + H2O = dimethyl sulfoxide + a menaquinol. Its activity is regulated as follows. Inhibited by dithionite, sodium hydrogensulfite and tungstate. Its function is as follows. Catalyzes the reduction of dimethyl sulfoxide (DMSO) to dimethyl sulfide (DMS). DMSO reductase serves as the terminal reductase under anaerobic conditions, with DMSO being the terminal electron acceptor. Terminal reductase during anaerobic growth on various sulfoxides and N-oxide compounds. Allows E.coli to grow anaerobically on DMSO as respiratory oxidant. In Escherichia coli (strain K12), this protein is Dimethyl sulfoxide reductase DmsA (dmsA).